We begin with the raw amino-acid sequence, 125 residues long: Cytochrome c-556 (125 aa).

Heme contacts are provided by methionine 13, cysteine 113, cysteine 116, and histidine 117. Heme c is bound by residues methionine 13, cysteine 113, cysteine 116, and histidine 117.

As to quaternary structure, monomer. Post-translationally, binds 1 heme c group covalently per subunit.

In terms of biological role, low-spin monoheme cytochrome c. The chain is Cytochrome c-556 from Agrobacterium tumefaciens (strain apple 185).